We begin with the raw amino-acid sequence, 1089 residues long: MCDVLMQPVRTPRPSTNLRSKPLRPTGDGGVFPRLGRLIVRRPWVVIAFWVALAGLLAPTVPSLDAISQRHPVAILPSDAPVLVSTRQMTAAFREAGLQSVAVVVLSDAKGLGAADERSYKELVDALRRDTRDVVMLQDFVTTPPLRELMTSKDNQAWILPVGLPGDLGSTQSKQAYARVADIVEHQVAGSTLTANLTGPAATVADLNLTGQRDRSRIEFAITILLLVILLIIYRNPITMVLPLITIGMSVVVAQRLVAIAGLAGLGIANQSIIFMSGMMVGAGTDYAVFLISRYHDYLRQGADSDQAVKKALTSIGKVIAASAATVAITFLGMVFTQLGILKTVGPMLGISVAVVFFAAVTLLPALMVLTGRRGWIAPRRDLTRRFWRSSGVHIVRRPKTHLLASALVLVILAGCAGLARYNYDDRKTLPASVESSIGYAALDKHFPSNLIIPEYLFIQSSTDLRTPKALADLEQMVQRVSQVPGVAMVRGITRPAGRSLEQARTSWQAGEVGSKLDEGSKQIAAHTGDIDKLAGGANLMASKLGDVRAQVNRAISTVGGLIDALAYLQDLLGGNRVLGELEGAEKLIGSMRALGDTIDADASFVANNTEWASPVLGALDSSPMCTADPACASARTELQRLVTARDDGTLAKISELARQLQATRAVQTLAATVSGLRGALATVIRAMGSLGMSSPGGVRSKINLVNKGVNDLADGSRQLAEGVQLLVDQVKKMGFGLGEASAFLLAMKDTATTPAMAGFYIPPELLSYATGESVKAETMPSEYRDLLGGLNVDQLKKVAAAFISPDGHSIRYLIQTDLNPFSTAAMDQIDAITAAARGAQPNTALADAKVSVVGLPVVLKDTRDYSDHDLRLIIAMTVCIVLLILIVLLRAIVAPLYLIGSVIVSYLAALGIGVIVFQFLLGQEMHWSIPGLTFVILVAVGADYNMLLISRLREEAVLGVRSGVIRTVASTGGVITAAGLIMAASMYGLVFASLGSVVQGAFVLGTGLLLDTFLVRTVTVPAIAVLVGQANWWLPSSWRPATWWPLGRRRGRAQRTKRKPLLPKEEEEQSPPDDDDLIGLWLHDGLRL.

Residues 1 to 26 are disordered; sequence MCDVLMQPVRTPRPSTNLRSKPLRPT. The next 12 membrane-spanning stretches (helical) occupy residues 44–64, 222–242, 257–277, 316–336, 349–369, 400–420, 555–575, 874–894, 898–918, 930–950, 973–993, and 996–1016; these read WVVI…VPSL, ITIL…TMVL, LVAI…IFMS, IGKV…GMVF, LGIS…ALMV, KTHL…AGLA, AIST…LLGG, IIAM…RAIV, YLIG…VIVF, IPGL…MLLI, GGVI…LVFA, and GSVV…TFLV. The segment at 1056–1078 is disordered; the sequence is RTKRKPLLPKEEEEQSPPDDDDL. Residues 1066 to 1078 are compositionally biased toward acidic residues; sequence EEEEQSPPDDDDL.

The protein belongs to the resistance-nodulation-cell division (RND) (TC 2.A.6) family. MmpL subfamily.

It is found in the cell membrane. In Mycobacterium bovis (strain ATCC BAA-935 / AF2122/97), this protein is Probable transport protein MmpL8 (mmpL8).